Reading from the N-terminus, the 358-residue chain is uncharacterized protein (358 aa).

29 to 36 serves as a coordination point for ATP; it reads GPINSGKT.

The protein belongs to the archaeal ATPase family.

This is an uncharacterized protein from Methanocaldococcus jannaschii (strain ATCC 43067 / DSM 2661 / JAL-1 / JCM 10045 / NBRC 100440) (Methanococcus jannaschii).